Reading from the N-terminus, the 485-residue chain is Glucagon receptor (485 aa).

Positions 1-26 (MPLTQLHCPHLLLLLLVLSCLPEAPS) are cleaved as a signal peptide. At 27 to 137 (AQVMDFLFEK…EIEVQKGVAK (111 aa)) the chain is on the extracellular side. Intrachain disulfides connect C44–C68, C59–C101, and C82–C122. Residues N47, N60, N75, N79, and N118 are each glycosylated (N-linked (GlcNAc...) asparagine). The chain crosses the membrane as a helical span at residues 138-162 (MYSSQQVMYTVGYSLSLGALLLALV). Topologically, residues 163 to 174 (ILLGLRKLHCTR) are cytoplasmic. Residues 175–199 (NYIHGNLFASFVLKAGSVLVIDWLL) form a helical membrane-spanning segment. Residues 200-226 (KTRYSQKIGDDLSVSVWLSDGAMAGCR) lie on the Extracellular side of the membrane. Residues C225 and C295 are joined by a disulfide bond. A helical transmembrane segment spans residues 227-250 (VATVIMQYGIIANYCWLLVEGVYL). Residues 251–264 (YSLLSLATFSERSF) are Cytoplasmic-facing. The chain crosses the membrane as a helical span at residues 265–286 (FSLYLGIGWGAPLLFVIPWVVV). Residues 287–304 (KCLFENVQCWTSNDNMGF) are Extracellular-facing. A helical transmembrane segment spans residues 305 to 327 (WWILRIPVFLALLINFFIFVHII). Over 328-351 (HLLVAKLRAHQMHYADYKFRLARS) the chain is Cytoplasmic. Residues 351–354 (STLT) are important for allosteric inhibitor binding. The chain crosses the membrane as a helical span at residues 352 to 370 (TLTLIPLLGVHEVVFAFVT). Topologically, residues 371–382 (DEHAQGTLRSTK) are extracellular. Residues 383–403 (LFFDLFLSSFQGLLVAVLYCF) traverse the membrane as a helical segment. Over 404-485 (LNKEVQAELM…SLPRLADSPT (82 aa)) the chain is Cytoplasmic. Positions 457-475 (AGSSSGTGCVPSMETSLAS) are enriched in polar residues. The interval 457 to 485 (AGSSSGTGCVPSMETSLASSLPRLADSPT) is disordered. A phosphoserine mark is found at S460 and S476.

The protein belongs to the G-protein coupled receptor 2 family. Post-translationally, ligand-binding promotes phosphorylation of serine residues in the C-terminal cytoplasmic domain. Phosphorylation is important for receptor endocytosis after ligand-binding. In terms of tissue distribution, expressed predominantly in liver, kidney, adrenal, lung and stomach, while lower levels of expression are detected in brown and white adipose tissue, cerebellum, duodenum and heart.

The protein resides in the cell membrane. Functionally, G-protein coupled receptor for glucagon that plays a central role in the regulation of blood glucose levels and glucose homeostasis. Regulates the rate of hepatic glucose production by promoting glycogen hydrolysis and gluconeogenesis. Plays an important role in mediating the responses to fasting. Ligand binding causes a conformation change that triggers signaling via guanine nucleotide-binding proteins (G proteins) and modulates the activity of down-stream effectors, such as adenylate cyclase. Promotes activation of adenylate cyclase. Besides, plays a role in signaling via a phosphatidylinositol-calcium second messenger system. The chain is Glucagon receptor (Gcgr) from Mus musculus (Mouse).